Consider the following 328-residue polypeptide: Beta-ketoacyl-[acyl-carrier-protein] synthase III (328 aa).

Residues Cys-122 and His-255 contribute to the active site. The tract at residues 256–260 is ACP-binding; sequence QANVR. Asn-285 is an active-site residue.

This sequence belongs to the thiolase-like superfamily. FabH family. As to quaternary structure, homodimer.

Its subcellular location is the cytoplasm. It carries out the reaction malonyl-[ACP] + acetyl-CoA + H(+) = 3-oxobutanoyl-[ACP] + CO2 + CoA. The protein operates within lipid metabolism; fatty acid biosynthesis. Functionally, catalyzes the condensation reaction of fatty acid synthesis by the addition to an acyl acceptor of two carbons from malonyl-ACP. Catalyzes the first condensation reaction which initiates fatty acid synthesis and may therefore play a role in governing the total rate of fatty acid production. Possesses both acetoacetyl-ACP synthase and acetyl transacylase activities. Its substrate specificity determines the biosynthesis of branched-chain and/or straight-chain of fatty acids. The chain is Beta-ketoacyl-[acyl-carrier-protein] synthase III from Bordetella petrii (strain ATCC BAA-461 / DSM 12804 / CCUG 43448).